Consider the following 437-residue polypeptide: MASSLYSFLLALSIVYIFVAPTHSTSRTALNHRHEAKVTGFQIMLEHVDSGKNLTKFQLLERAIERGSRRLQRLEAMLNGPSGVETSVYAGDGEYLMNLSIGTPAQPFSAIMDTGSDLIWTQCQPCTQCFNQSTPIFNPQGSSSFSTLPCSSQLCQALSSPTCSNNFCQYTYGYGDGSETQGSMGTETLTFGSVSIPNITFGCGENNQGFGQGNGAGLVGMGRGPLSLPSQLDVTKFSYCMTPIGSSTPSNLLLGSLANSVTAGSPNTTLIQSSQIPTFYYITLNGLSVGSTRLPIDPSAFALNSNNGTGGIIIDSGTTLTYFVNNAYQSVRQEFISQINLPVVNGSSSGFDLCFQTPSDPSNLQIPTFVMHFDGGDLELPSENYFISPSNGLICLAMGSSSQGMSIFGNIQQQNMLVVYDTGNSVVSFASAQCGAS.

A signal peptide spans 1–24 (MASSLYSFLLALSIVYIFVAPTHS). Positions 25 to 78 (TSRTALNHRHEAKVTGFQIMLEHVDSGKNLTKFQLLERAIERGSRRLQRLEAML) are cleaved as a propeptide — activation peptide. Residues Asn53 and Asn98 are each glycosylated (N-linked (GlcNAc...) asparagine). A Peptidase A1 domain is found at 95–430 (YLMNLSIGTP…DTGNSVVSFA (336 aa)). Asp113 is a catalytic residue. 6 cysteine pairs are disulfide-bonded: Cys123/Cys126, Cys129/Cys203, Cys150/Cys168, Cys155/Cys163, Cys240/Cys434, and Cys354/Cys395. The N-linked (GlcNAc...) asparagine glycan is linked to Asn131. Asn198, Asn267, and Asn307 each carry an N-linked (GlcNAc...) asparagine glycan. Asp315 is a catalytic residue. Residue Asn345 is glycosylated (N-linked (GlcNAc...) asparagine).

The protein belongs to the peptidase A1 family.

Its subcellular location is the secreted. It carries out the reaction Similar to pepsin, but also cleaves on either side of Asp and at Lys-|-Arg.. Its activity is regulated as follows. Inhibited by pepstatin and by diazoacetyl-D,L-norleucine methyl ester (DAN) in the presence of Cu(2+) ions. Functionally, extracellular proteinase found in the pitcher fluid of carnivorous plants. Digest prey for nitrogen uptake. This is Aspartic proteinase nepenthesin-1 (nep1) from Nepenthes gracilis (Slender pitcher plant).